The sequence spans 269 residues: Lck-interacting transmembrane adapter 1 (269 aa).

Residues 1–7 (MRPPVPS) are Extracellular-facing. A helical; Signal-anchor for type III membrane protein membrane pass occupies residues 8-28 (APLALWVLGCFSLLLWLWALC). Residues Cys-28 and Cys-31 are each lipidated (S-palmitoyl cysteine). The Cytoplasmic portion of the chain corresponds to 29 to 269 (TACHRKRAQR…VYESIKEMGL (241 aa)). A disordered region spans residues 102-133 (STRSQVPNSAFPPRQLPRAPPAAPATAPSTSS). Positions 115–124 (RQLPRAPPAA) are enriched in pro residues. Phosphotyrosine is present on residues Tyr-137, Tyr-175, and Tyr-207. An interaction with GRB2 region spans residues 137–140 (YSNV). Interaction with CSK regions lie at residues 175–178 (YACI) and 207–210 (YSRV). Residues Tyr-242 and Tyr-261 each carry the phosphotyrosine; by LYN or LCK modification. The segment at 242–245 (YEAI) is interaction with LCK and PIK3R1. Residues 261–264 (YESI) form an interaction with LCK, PLCG2 and PIK3R1 region. Ser-263 carries the phosphoserine modification.

As to quaternary structure, when phosphorylated in response to TCR stimulation and/or CD4 costimulation, interacts with LCK, CSK, FYN, PTPN11/SHP2, GRB2, PIK3R1 and GRAP2. When phosphorylated in response to BCR activation, interacts with LYN, PIK3R1, PLCG2 and GRB2. Post-translationally, palmitoylation of Cys-28 and Cys-31 is required for raft targeting. Phosphorylated on tyrosines upon TCR activation and/or CD4 coreceptor stimulation, or upon BCR stimulation; which leads to the recruitment of SH2-containing proteins. In terms of tissue distribution, expressed in spleen and lung. Present in primary B-cells and peripheral T-cells (at protein level).

It is found in the cell membrane. In terms of biological role, involved in BCR (B-cell antigen receptor)-mediated signaling in B-cells and TCR (T-cell antigen receptor)-mediated T-cell signaling in T-cells. In absence of TCR signaling, may be involved in CD4-mediated inhibition of T-cell activation. Couples activation of these receptors and their associated kinases with distal intracellular events such as calcium mobilization or MAPK activation through the recruitment of PLCG2, GRB2, GRAP2, and other signaling molecules. This chain is Lck-interacting transmembrane adapter 1 (Lime1), found in Mus musculus (Mouse).